Consider the following 237-residue polypeptide: Ribonuclease PH (237 aa).

Phosphate-binding positions include arginine 86 and 124 to 126; that span reads GTR.

The protein belongs to the RNase PH family. As to quaternary structure, homohexameric ring arranged as a trimer of dimers.

It carries out the reaction tRNA(n+1) + phosphate = tRNA(n) + a ribonucleoside 5'-diphosphate. In terms of biological role, phosphorolytic 3'-5' exoribonuclease that plays an important role in tRNA 3'-end maturation. Removes nucleotide residues following the 3'-CCA terminus of tRNAs; can also add nucleotides to the ends of RNA molecules by using nucleoside diphosphates as substrates, but this may not be physiologically important. Probably plays a role in initiation of 16S rRNA degradation (leading to ribosome degradation) during starvation. The protein is Ribonuclease PH of Coxiella burnetii (strain RSA 331 / Henzerling II).